A 329-amino-acid chain; its full sequence is Cytosolic arginine sensor for mTORC1 subunit 1 (329 aa).

Ser14 carries the post-translational modification Phosphoserine. ACT domains are found at residues 72 to 138 (AEAT…HTLA) and 260 to 321 (GELW…EVLQ). L-arginine is bound by residues 111-112 (SV), Gly274, 280-281 (IV), and 300-304 (TFNFD).

Belongs to the GATS family. As to quaternary structure, forms homodimers and heterodimers with CASTOR2. Interacts with the GATOR2 complex which is composed of MIOS, SEC13, SEH1L, WDR24 and WDR59; the interaction is negatively regulated by arginine. Interacts with TM4SF5; the interaction is positively regulated by leucine and is negatively regulated by arginine. In terms of processing, phosphorylation at Ser-14 by AKT1, promoting the interaction between CASTOR1 and RNF167. Ubiquitinated by RNF167 via 'Lys-29'-polyubiquitination, leading to its degradation, releasing the GATOR2 complex. Ubiquitination by RNF167 is promoted by phosphorylation at Ser-14 by AKT1.

The protein localises to the cytoplasm. It localises to the cytosol. Functionally, functions as an intracellular arginine sensor within the amino acid-sensing branch of the TORC1 signaling pathway. As a homodimer or a heterodimer with CASTOR2, binds and inhibits the GATOR subcomplex GATOR2 and thereby mTORC1. Binding of arginine to CASTOR1 allosterically disrupts the interaction of CASTOR1-containing dimers with GATOR2 which can in turn activate mTORC1 and the TORC1 signaling pathway. This is Cytosolic arginine sensor for mTORC1 subunit 1 from Bos taurus (Bovine).